The chain runs to 250 residues: Imidazole glycerol phosphate synthase subunit HisF (250 aa).

Catalysis depends on residues D11 and D130.

Belongs to the HisA/HisF family. As to quaternary structure, heterodimer of HisH and HisF.

It localises to the cytoplasm. It catalyses the reaction 5-[(5-phospho-1-deoxy-D-ribulos-1-ylimino)methylamino]-1-(5-phospho-beta-D-ribosyl)imidazole-4-carboxamide + L-glutamine = D-erythro-1-(imidazol-4-yl)glycerol 3-phosphate + 5-amino-1-(5-phospho-beta-D-ribosyl)imidazole-4-carboxamide + L-glutamate + H(+). It participates in amino-acid biosynthesis; L-histidine biosynthesis; L-histidine from 5-phospho-alpha-D-ribose 1-diphosphate: step 5/9. Functionally, IGPS catalyzes the conversion of PRFAR and glutamine to IGP, AICAR and glutamate. The HisF subunit catalyzes the cyclization activity that produces IGP and AICAR from PRFAR using the ammonia provided by the HisH subunit. This is Imidazole glycerol phosphate synthase subunit HisF from Bacteroides fragilis (strain YCH46).